We begin with the raw amino-acid sequence, 192 residues long: MSEQTQQQNSEEAVENVEAVETVETVGNADGVQEQAAAEPAYEDLQARIAELEAQLKDEQLRALANEQNLRRRHQQEIADTHKFAGQKFAVEMLPVKDYLEMALLDQSGNFDALKMGVQMTLNELQKAFDATQIKEINPKAGDKLDPNIHQAMQAVASEQEPNTVVGVMKKGYTLSDRVLRPAMVTVAQKEA.

This sequence belongs to the GrpE family. As to quaternary structure, homodimer.

It is found in the cytoplasm. Functionally, participates actively in the response to hyperosmotic and heat shock by preventing the aggregation of stress-denatured proteins, in association with DnaK and GrpE. It is the nucleotide exchange factor for DnaK and may function as a thermosensor. Unfolded proteins bind initially to DnaJ; upon interaction with the DnaJ-bound protein, DnaK hydrolyzes its bound ATP, resulting in the formation of a stable complex. GrpE releases ADP from DnaK; ATP binding to DnaK triggers the release of the substrate protein, thus completing the reaction cycle. Several rounds of ATP-dependent interactions between DnaJ, DnaK and GrpE are required for fully efficient folding. The chain is Protein GrpE from Neisseria gonorrhoeae (strain NCCP11945).